The primary structure comprises 778 residues: Phosphoribosylformylglycinamidine synthase subunit PurL (778 aa).

Histidine 44 is an active-site residue. ATP is bound by residues tyrosine 47 and lysine 86. Mg(2+) is bound at residue glutamate 88. Residues 89–92 (SHNH) and arginine 111 contribute to the substrate site. Histidine 90 functions as the Proton acceptor in the catalytic mechanism. Positions 112 and 265 each coordinate Mg(2+). 309–311 (ESQ) lines the substrate pocket. Residues 455 to 474 (TRQPPGEGLPGRSGQAGPPK) form a disordered region. Residues asparagine 518 and glycine 555 each coordinate ATP. Asparagine 556 provides a ligand contact to Mg(2+). A substrate-binding site is contributed by serine 558.

It belongs to the FGAMS family. In terms of assembly, monomer. Part of the FGAM synthase complex composed of 1 PurL, 1 PurQ and 2 PurS subunits.

It is found in the cytoplasm. It catalyses the reaction N(2)-formyl-N(1)-(5-phospho-beta-D-ribosyl)glycinamide + L-glutamine + ATP + H2O = 2-formamido-N(1)-(5-O-phospho-beta-D-ribosyl)acetamidine + L-glutamate + ADP + phosphate + H(+). It functions in the pathway purine metabolism; IMP biosynthesis via de novo pathway; 5-amino-1-(5-phospho-D-ribosyl)imidazole from N(2)-formyl-N(1)-(5-phospho-D-ribosyl)glycinamide: step 1/2. Part of the phosphoribosylformylglycinamidine synthase complex involved in the purines biosynthetic pathway. Catalyzes the ATP-dependent conversion of formylglycinamide ribonucleotide (FGAR) and glutamine to yield formylglycinamidine ribonucleotide (FGAM) and glutamate. The FGAM synthase complex is composed of three subunits. PurQ produces an ammonia molecule by converting glutamine to glutamate. PurL transfers the ammonia molecule to FGAR to form FGAM in an ATP-dependent manner. PurS interacts with PurQ and PurL and is thought to assist in the transfer of the ammonia molecule from PurQ to PurL. This chain is Phosphoribosylformylglycinamidine synthase subunit PurL, found in Symbiobacterium thermophilum (strain DSM 24528 / JCM 14929 / IAM 14863 / T).